Reading from the N-terminus, the 541-residue chain is Peptide chain release factor 3 (541 aa).

Positions glutamate 14–glycine 283 constitute a tr-type G domain. Residues serine 23–threonine 30, aspartate 91–histidine 95, and asparagine 145–aspartate 148 each bind GTP.

The protein belongs to the TRAFAC class translation factor GTPase superfamily. Classic translation factor GTPase family. PrfC subfamily.

The protein localises to the cytoplasm. Its function is as follows. Increases the formation of ribosomal termination complexes and stimulates activities of RF-1 and RF-2. It binds guanine nucleotides and has strong preference for UGA stop codons. It may interact directly with the ribosome. The stimulation of RF-1 and RF-2 is significantly reduced by GTP and GDP, but not by GMP. The sequence is that of Peptide chain release factor 3 from Acaryochloris marina (strain MBIC 11017).